The sequence spans 985 residues: Regulator of telomere elongation helicase 1 homolog (985 aa).

In terms of domain architecture, Helicase ATP-binding spans alanine 7 to aspartate 303. Serine 42–threonine 49 contacts ATP. The [4Fe-4S] cluster site is built by cysteine 146, cysteine 164, cysteine 173, and cysteine 209. A DEAH box motif is present at residues aspartate 252 to histidine 255. Threonine 874 is modified (phosphothreonine).

This sequence belongs to the helicase family. RAD3/XPD subfamily.

The protein localises to the nucleus. The enzyme catalyses ATP + H2O = ADP + phosphate + H(+). A probable ATP-dependent DNA helicase implicated in DNA repair and the maintenance of genomic stability. Acts as an anti-recombinase to counteract toxic recombination and limit crossover during meiosis. Regulates meiotic recombination and crossover homeostasis by physically dissociating strand invasion events and thereby promotes noncrossover repair by meiotic synthesis dependent strand annealing (SDSA) as well as disassembly of D loop recombination intermediates. In Drosophila erecta (Fruit fly), this protein is Regulator of telomere elongation helicase 1 homolog.